Consider the following 390-residue polypeptide: 2-oxoisovalerate dehydrogenase subunit beta, mitochondrial (390 aa).

A mitochondrion-targeting transit peptide spans 1 to 48; the sequence is MAAVAARAGGLLWLRAAGAERRRCGLRCAALVQGFLQPGGEDTAQKRR. Tyrosine 150 serves as a coordination point for thiamine diphosphate. K(+)-binding residues include glycine 176, leucine 178, threonine 179, cysteine 226, and aspartate 229. Lysine 230 is modified (N6-acetyllysine). Asparagine 231 provides a ligand contact to K(+). An N6-acetyllysine modification is found at lysine 239.

As to quaternary structure, heterotetramer of 2 alpha/BCKDHA and 2 beta chains/BCKDHB that forms the branched-chain alpha-keto acid decarboxylase (E1) component of the BCKD complex. The branched-chain alpha-ketoacid dehydrogenase is a large complex composed of three major building blocks E1, E2 and E3. It is organized around E2, a 24-meric cubic core composed of DBT, to which are associated 6 to 12 copies of E1, and approximately 6 copies of the dehydrogenase E3, a DLD dimer. Thiamine diphosphate serves as cofactor.

It localises to the mitochondrion matrix. The catalysed reaction is N(6)-[(R)-lipoyl]-L-lysyl-[protein] + 3-methyl-2-oxobutanoate + H(+) = N(6)-[(R)-S(8)-2-methylpropanoyldihydrolipoyl]-L-lysyl-[protein] + CO2. Together with BCKDHA forms the heterotetrameric E1 subunit of the mitochondrial branched-chain alpha-ketoacid dehydrogenase (BCKD) complex. The BCKD complex catalyzes the multi-step oxidative decarboxylation of alpha-ketoacids derived from the branched-chain amino-acids valine, leucine and isoleucine producing CO2 and acyl-CoA which is subsequently utilized to produce energy. The E1 subunit catalyzes the first step with the decarboxylation of the alpha-ketoacid forming an enzyme-product intermediate. A reductive acylation mediated by the lipoylamide cofactor of E2 extracts the acyl group from the E1 active site for the next step of the reaction. The polypeptide is 2-oxoisovalerate dehydrogenase subunit beta, mitochondrial (Mus musculus (Mouse)).